A 72-amino-acid polypeptide reads, in one-letter code: Small proline-rich protein 2B (72 aa).

The segment covering 1–11 (MSYQQQQCKQP) has biased composition (low complexity). Residues 1–20 (MSYQQQQCKQPCQPPPVCPT) form a disordered region. 3 tandem repeats follow at residues 21-29 (PKCPEPCPP), 30-38 (PKCPEPCPP), and 39-47 (PKCPQPCPP). The interval 21 to 47 (PKCPEPCPPPKCPEPCPPPKCPQPCPP) is 3 X 9 AA tandem repeats of P-K-C-P-[EQ]-P-C-P-P. The disordered stretch occupies residues 42-72 (PQPCPPQQCQQKYPPVTPSPPCQPKYPPKSK). The span at 56–72 (PVTPSPPCQPKYPPKSK) shows a compositional bias: pro residues.

Belongs to the cornifin (SPRR) family. In terms of tissue distribution, suprabasal layers of squamous-differentiated tissues such as epidermis, esophagus, tongue and trachea.

It localises to the cytoplasm. Its function is as follows. Cross-linked envelope protein of keratinocytes. It is a keratinocyte protein that first appears in the cell cytosol, but ultimately becomes cross-linked to membrane proteins by transglutaminase. All that results in the formation of an insoluble envelope beneath the plasma membrane. The chain is Small proline-rich protein 2B (SPRR2B) from Homo sapiens (Human).